Reading from the N-terminus, the 287-residue chain is U-megalopygitoxin(8)-Mo12 (287 aa).

The signal sequence occupies residues 1–17; the sequence is MNLQYLILSLLSTTVYG. Histidine 284 bears the Histidine amide mark.

The protein belongs to the megalysin family. Contains 2 disulfide bonds. As to expression, expressed by the venom apparatus.

The protein localises to the secreted. The protein resides in the target cell membrane. Its function is as follows. May function as a large pore-forming protein. In Megalopyge opercularis (Southern flannel moth), this protein is U-megalopygitoxin(8)-Mo12.